We begin with the raw amino-acid sequence, 248 residues long: tRNA (guanine-N(1)-)-methyltransferase (248 aa).

S-adenosyl-L-methionine is bound by residues Gly-113 and 133 to 138; that span reads VGDYVL.

Belongs to the RNA methyltransferase TrmD family. Homodimer.

It is found in the cytoplasm. The catalysed reaction is guanosine(37) in tRNA + S-adenosyl-L-methionine = N(1)-methylguanosine(37) in tRNA + S-adenosyl-L-homocysteine + H(+). In terms of biological role, specifically methylates guanosine-37 in various tRNAs. This is tRNA (guanine-N(1)-)-methyltransferase from Shewanella oneidensis (strain ATCC 700550 / JCM 31522 / CIP 106686 / LMG 19005 / NCIMB 14063 / MR-1).